The sequence spans 303 residues: Glutaminase (303 aa).

Positions 63, 113, 157, 164, 188, 239, and 257 each coordinate substrate.

It belongs to the glutaminase family. Homotetramer.

The catalysed reaction is L-glutamine + H2O = L-glutamate + NH4(+). This is Glutaminase from Saccharopolyspora erythraea (strain ATCC 11635 / DSM 40517 / JCM 4748 / NBRC 13426 / NCIMB 8594 / NRRL 2338).